Consider the following 658-residue polypeptide: Carnitine O-palmitoyltransferase 2, mitochondrial (658 aa).

The transit peptide at 1–25 (MVARLLLRSWSRGLAVGPGAPCRPL) directs the protein to the mitochondrion. Residues 26 to 178 (STGFEPSQYL…DLLEPEVFHL (153 aa)) lie on the Mitochondrial matrix side of the membrane. Lys-69 bears the N6-succinyllysine mark. Lys-79 bears the N6-acetyllysine mark. Lys-85 is subject to N6-succinyllysine. An intramembrane region (note=Mitochondrial inner membrane) is located at residues 179–208 (NPAKSDTDTFKRFIRFVPSFLSWYGAYLVN). Residues 209–658 (AYPLDMSQYY…DALEGKMIKT (450 aa)) are Mitochondrial matrix-facing. Position 239 is an N6-acetyllysine; alternate (Lys-239). Lys-239 carries the post-translational modification N6-succinyllysine; alternate. Catalysis depends on His-372, which acts as the Proton acceptor. Lys-418 carries the post-translational modification N6-acetyllysine; alternate. N6-succinyllysine; alternate is present on Lys-418. N6-succinyllysine is present on residues Lys-424 and Lys-439. CoA is bound at residue 452–464 (GREFLKKQKLSPD). Residues Tyr-486, Ser-488, and Thr-499 each contribute to the (R)-carnitine site. N6-acetyllysine; alternate is present on Lys-510. Lys-510 carries the N6-succinyllysine; alternate modification.

Belongs to the carnitine/choline acetyltransferase family.

It localises to the mitochondrion inner membrane. The enzyme catalyses (R)-carnitine + hexadecanoyl-CoA = O-hexadecanoyl-(R)-carnitine + CoA. It carries out the reaction octanoyl-CoA + (R)-carnitine = O-octanoyl-(R)-carnitine + CoA. It catalyses the reaction decanoyl-CoA + (R)-carnitine = O-decanoyl-(R)-carnitine + CoA. The catalysed reaction is dodecanoyl-CoA + (R)-carnitine = O-dodecanoyl-R-carnitine + CoA. The enzyme catalyses tetradecanoyl-CoA + (R)-carnitine = O-tetradecanoyl-(R)-carnitine + CoA. It carries out the reaction (R)-carnitine + octadecanoyl-CoA = O-octadecanoyl-(R)-carnitine + CoA. It catalyses the reaction eicosanoyl-CoA + (R)-carnitine = O-eicosanoyl-(R)-carnitine + CoA. The catalysed reaction is (9Z)-tetradecenoyl-CoA + (R)-carnitine = O-(9Z)-tetradecenoyl-(R)-carnitine + CoA. The enzyme catalyses (5Z)-tetradecenoyl-CoA + (R)-carnitine = O-(5Z)-tetradecenoyl-(R)-carnitine + CoA. It carries out the reaction (R)-carnitine + (9Z)-octadecenoyl-CoA = O-(9Z)-octadecenoyl-(R)-carnitine + CoA. It catalyses the reaction 4,8-dimethylnonanoyl-CoA + (R)-carnitine = O-4,8-dimethylnonanoyl-(R)-carnitine + CoA. Its pathway is lipid metabolism; fatty acid beta-oxidation. Its function is as follows. Involved in the intramitochondrial synthesis of acylcarnitines from accumulated acyl-CoA metabolites. Reconverts acylcarnitines back into the respective acyl-CoA esters that can then undergo beta-oxidation, an essential step for the mitochondrial uptake of long-chain fatty acids and their subsequent beta-oxidation in the mitochondrion. Active with medium (C8-C12) and long-chain (C14-C18) acyl-CoA esters. The sequence is that of Carnitine O-palmitoyltransferase 2, mitochondrial (CPT2) from Bos taurus (Bovine).